The following is a 253-amino-acid chain: Triosephosphate isomerase (253 aa).

Residue 8–10 (NWK) coordinates substrate. H93 acts as the Electrophile in catalysis. The active-site Proton acceptor is the E165. Residues G171, S210, and 231 to 232 (GG) each bind substrate.

Belongs to the triosephosphate isomerase family. In terms of assembly, homodimer.

The protein resides in the cytoplasm. It carries out the reaction D-glyceraldehyde 3-phosphate = dihydroxyacetone phosphate. It functions in the pathway carbohydrate biosynthesis; gluconeogenesis. The protein operates within carbohydrate degradation; glycolysis; D-glyceraldehyde 3-phosphate from glycerone phosphate: step 1/1. Functionally, involved in the gluconeogenesis. Catalyzes stereospecifically the conversion of dihydroxyacetone phosphate (DHAP) to D-glyceraldehyde-3-phosphate (G3P). The polypeptide is Triosephosphate isomerase (Francisella tularensis subsp. mediasiatica (strain FSC147)).